We begin with the raw amino-acid sequence, 141 residues long: Nucleoside diphosphate kinase 1 (141 aa).

6 residues coordinate ATP: K11, F59, R87, T93, R104, and N114. H117 acts as the Pros-phosphohistidine intermediate in catalysis.

The protein belongs to the NDK family. In terms of assembly, homotetramer. Mg(2+) serves as cofactor.

The protein resides in the cytoplasm. It carries out the reaction a 2'-deoxyribonucleoside 5'-diphosphate + ATP = a 2'-deoxyribonucleoside 5'-triphosphate + ADP. It catalyses the reaction a ribonucleoside 5'-diphosphate + ATP = a ribonucleoside 5'-triphosphate + ADP. Functionally, major role in the synthesis of nucleoside triphosphates other than ATP. The ATP gamma phosphate is transferred to the NDP beta phosphate via a ping-pong mechanism, using a phosphorylated active-site intermediate. The chain is Nucleoside diphosphate kinase 1 from Protochlamydia amoebophila (strain UWE25).